The following is a 310-amino-acid chain: Apolipoprotein E (310 aa).

Residues 1–18 (MKVLWAALVVTLLAGCGA) form the signal peptide. Repeat copies occupy residues 77-98 (ALMDDTMKEVKACQSELEEQLG), 99-120 (PVTEETKARVSKELQAAQARLG), 121-142 (ADMEEVRSRLAQYRGELQAMVG), 143-164 (QSTEELRGRLSAHLRKMRKRLL), 165-186 (RDAEDLQRRLAVYQAGIWEGAE), 187-208 (RSVNTLREHLGPLAEQAATVHT), 209-226 (LVSKPLQERAEAWAQRLR), and 227-248 (GRLEKAGFPVGDRLDEVREQVQ). The interval 77–248 (ALMDDTMKEV…RLDEVREQVQ (172 aa)) is 8 X 22 AA approximate tandem repeats. Residues 155–165 (HLRKMRKRLLR) are LDL and other lipoprotein receptors binding. 159-162 (MRKR) is a heparin binding site. The segment at 207 to 283 (HTLVSKPLQE…SWFEPLVQDM (77 aa)) is lipid-binding and lipoprotein association. Position 222–229 (222–229 (AQRLRGRL)) interacts with heparin. The interval 259 to 310 (NQVRLQAEAFQGRLKSWFEPLVQDMQQKWAELVEKVQLAVGAVPTSVPSEKQ) is homooligomerization. The tract at residues 271–283 (RLKSWFEPLVQDM) is specificity for association with VLDL.

Belongs to the apolipoprotein A1/A4/E family. Homotetramer. May interact with ABCA1; functionally associated with ABCA1 in the biogenesis of HDLs. May interact with APP/A4 amyloid-beta peptide; the interaction is extremely stable in vitro but its physiological significance is unclear. May interact with MAPT. May interact with MAP2. In the cerebrospinal fluid, interacts with secreted SORL1. Interacts with PMEL; this allows the loading of PMEL luminal fragment on ILVs to induce fibril nucleation. Post-translationally, APOE exists as multiple glycosylated and sialylated glycoforms within cells and in plasma. The extent of glycosylation and sialylation are tissue and context specific. In terms of processing, glycated in plasma VLDL. Phosphorylated by FAM20C in the extracellular medium.

The protein localises to the secreted. Its subcellular location is the extracellular space. It localises to the extracellular matrix. It is found in the extracellular vesicle. The protein resides in the endosome. The protein localises to the multivesicular body. In terms of biological role, APOE is an apolipoprotein, a protein associating with lipid particles, that mainly functions in lipoprotein-mediated lipid transport between organs via the plasma and interstitial fluids. APOE is a core component of plasma lipoproteins and is involved in their production, conversion and clearance. Apolipoproteins are amphipathic molecules that interact both with lipids of the lipoprotein particle core and the aqueous environment of the plasma. As such, APOE associates with chylomicrons, chylomicron remnants, very low density lipoproteins (VLDL) and intermediate density lipoproteins (IDL) but shows a preferential binding to high-density lipoproteins (HDL). It also binds a wide range of cellular receptors including the LDL receptor/LDLR and the very low-density lipoprotein receptor/VLDLR that mediate the cellular uptake of the APOE-containing lipoprotein particles. Finally, APOE also has a heparin-binding activity and binds heparan-sulfate proteoglycans on the surface of cells, a property that supports the capture and the receptor-mediated uptake of APOE-containing lipoproteins by cells. This is Apolipoprotein E (APOE) from Ceratotherium simum cottoni (Northern white rhinoceros).